Consider the following 120-residue polypeptide: Ribonuclease P protein component (120 aa).

It belongs to the RnpA family. Consists of a catalytic RNA component (M1 or rnpB) and a protein subunit.

It carries out the reaction Endonucleolytic cleavage of RNA, removing 5'-extranucleotides from tRNA precursor.. Its function is as follows. RNaseP catalyzes the removal of the 5'-leader sequence from pre-tRNA to produce the mature 5'-terminus. It can also cleave other RNA substrates such as 4.5S RNA. The protein component plays an auxiliary but essential role in vivo by binding to the 5'-leader sequence and broadening the substrate specificity of the ribozyme. The polypeptide is Ribonuclease P protein component (Rickettsia bellii (strain RML369-C)).